A 488-amino-acid chain; its full sequence is Inosine-5'-monophosphate dehydrogenase (488 aa).

CBS domains lie at 95–153 and 157–214; these read VITN…SMKI and MTKE…PNSS. Residues aspartate 251 and 301–303 contribute to the NAD(+) site; that span reads GIG. Residues glycine 303 and glycine 305 each coordinate K(+). Serine 306 is an IMP binding site. Cysteine 308 is a K(+) binding site. The Thioimidate intermediate role is filled by cysteine 308. IMP-binding positions include 341 to 343, 364 to 365, and 388 to 392; these read DGG, GS, and YRGMG. Catalysis depends on arginine 404, which acts as the Proton acceptor. Glutamate 416 is an IMP binding site. Residues glutamate 470, serine 471, and histidine 472 each contribute to the K(+) site.

This sequence belongs to the IMPDH/GMPR family. In terms of assembly, homotetramer. K(+) serves as cofactor.

It catalyses the reaction IMP + NAD(+) + H2O = XMP + NADH + H(+). It participates in purine metabolism; XMP biosynthesis via de novo pathway; XMP from IMP: step 1/1. Its activity is regulated as follows. Mycophenolic acid (MPA) is a non-competitive inhibitor that prevents formation of the closed enzyme conformation by binding to the same site as the amobile flap. In contrast, mizoribine monophosphate (MZP) is a competitive inhibitor that induces the closed conformation. MPA is a potent inhibitor of mammalian IMPDHs but a poor inhibitor of the bacterial enzymes. MZP is a more potent inhibitor of bacterial IMPDH. In terms of biological role, catalyzes the conversion of inosine 5'-phosphate (IMP) to xanthosine 5'-phosphate (XMP), the first committed and rate-limiting step in the de novo synthesis of guanine nucleotides, and therefore plays an important role in the regulation of cell growth. This is Inosine-5'-monophosphate dehydrogenase from Bacillus subtilis (strain 168).